The following is a 451-amino-acid chain: tRNA-2-methylthio-N(6)-dimethylallyladenosine synthase (451 aa).

In terms of domain architecture, MTTase N-terminal spans 5–121; the sequence is RQYHITTFGC…LQDLLEQVEG (117 aa). 6 residues coordinate [4Fe-4S] cluster: Cys-14, Cys-50, Cys-84, Cys-156, Cys-160, and Cys-163. Positions 142-379 constitute a Radical SAM core domain; it reads RDSTVTAWVN…NHLVAQKAAE (238 aa). The 65-residue stretch at 382–446 folds into the TRAM domain; the sequence is QRYAGRIEEV…AFSLTGEAVE (65 aa).

This sequence belongs to the methylthiotransferase family. MiaB subfamily. In terms of assembly, monomer. [4Fe-4S] cluster serves as cofactor.

Its subcellular location is the cytoplasm. The catalysed reaction is N(6)-dimethylallyladenosine(37) in tRNA + (sulfur carrier)-SH + AH2 + 2 S-adenosyl-L-methionine = 2-methylsulfanyl-N(6)-dimethylallyladenosine(37) in tRNA + (sulfur carrier)-H + 5'-deoxyadenosine + L-methionine + A + S-adenosyl-L-homocysteine + 2 H(+). Catalyzes the methylthiolation of N6-(dimethylallyl)adenosine (i(6)A), leading to the formation of 2-methylthio-N6-(dimethylallyl)adenosine (ms(2)i(6)A) at position 37 in tRNAs that read codons beginning with uridine. This is tRNA-2-methylthio-N(6)-dimethylallyladenosine synthase from Picosynechococcus sp. (strain ATCC 27264 / PCC 7002 / PR-6) (Agmenellum quadruplicatum).